A 224-amino-acid polypeptide reads, in one-letter code: Holliday junction branch migration complex subunit RuvA (224 aa).

A domain I region spans residues 1–64 (MIGKVAGILD…EDLLQLFGFP (64 aa)). The interval 65–143 (TMIEKEWHRL…ALMAMGGGTA (79 aa)) is domain II. Residues 141–185 (GTAALAPSEPPEPEPGTSSGSRRKTRAPEPPRPSHTADALSALAN) are disordered. The segment at 144–170 (ALAPSEPPEPEPGTSSGSRRKTRAPEP) is flexible linker. A domain III region spans residues 171–224 (PRPSHTADALSALANLGYQPTDAAQAVAQAAGESPDADTAALIRAALKLLAPKS).

Belongs to the RuvA family. Homotetramer. Forms an RuvA(8)-RuvB(12)-Holliday junction (HJ) complex. HJ DNA is sandwiched between 2 RuvA tetramers; dsDNA enters through RuvA and exits via RuvB. An RuvB hexamer assembles on each DNA strand where it exits the tetramer. Each RuvB hexamer is contacted by two RuvA subunits (via domain III) on 2 adjacent RuvB subunits; this complex drives branch migration. In the full resolvosome a probable DNA-RuvA(4)-RuvB(12)-RuvC(2) complex forms which resolves the HJ.

The protein localises to the cytoplasm. Functionally, the RuvA-RuvB-RuvC complex processes Holliday junction (HJ) DNA during genetic recombination and DNA repair, while the RuvA-RuvB complex plays an important role in the rescue of blocked DNA replication forks via replication fork reversal (RFR). RuvA specifically binds to HJ cruciform DNA, conferring on it an open structure. The RuvB hexamer acts as an ATP-dependent pump, pulling dsDNA into and through the RuvAB complex. HJ branch migration allows RuvC to scan DNA until it finds its consensus sequence, where it cleaves and resolves the cruciform DNA. The protein is Holliday junction branch migration complex subunit RuvA of Cereibacter sphaeroides (strain ATCC 17029 / ATH 2.4.9) (Rhodobacter sphaeroides).